The primary structure comprises 296 residues: F-box only protein 2 (296 aa).

A disordered region spans residues 1 to 41; that stretch reads MDGDGDPESVGQPEEASPEEQPEEASAEEERPEDQQEEEAA. Residues 16 to 40 are compositionally biased toward acidic residues; it reads ASPEEQPEEASAEEERPEDQQEEEA. The region spanning 44–91 is the F-box domain; that stretch reads AAYLDELPEPLLLRVLAALPAAELVQACRLVCLRWKELVDGAPLWLLK. The FBA domain occupies 113–296; it reads FYFLSKRRRN…VTNSSVWVEP (184 aa). A carbohydrate-binding positions include 210–212 and 278–279; these read RSD and YW.

As to quaternary structure, component of the SCF(FBXO2) complex consisting of CUL1, RBX1, SKP1 and FBXO2. Predominantly detected as heterodimer with SKP1; the heterodimer with SKP1 is not part of the SCF(FBXO2) complex.

It is found in the cytoplasm. Its subcellular location is the microsome membrane. Its pathway is protein modification; protein ubiquitination. In terms of biological role, substrate recognition component of a SCF (SKP1-CUL1-F-box protein) E3 ubiquitin-protein ligase complex that mediates the ubiquitination and subsequent proteasomal degradation of target proteins. Involved in the endoplasmic reticulum-associated degradation pathway (ERAD) for misfolded lumenal proteins by recognizing and binding sugar chains on unfolded glycoproteins that are retrotranslocated into the cytosol and promoting their ubiquitination and subsequent degradation. Prevents formation of cytosolic aggregates of unfolded glycoproteins that have been retrotranslocated into the cytosol. Able to recognize and bind denatured glycoproteins, preferentially those of the high-mannose type. The chain is F-box only protein 2 (FBXO2) from Homo sapiens (Human).